Here is a 96-residue protein sequence, read N- to C-terminus: Large ribosomal subunit protein uL23 (96 aa).

This sequence belongs to the universal ribosomal protein uL23 family. Part of the 50S ribosomal subunit. Contacts protein L29, and trigger factor when it is bound to the ribosome.

Functionally, one of the early assembly proteins it binds 23S rRNA. One of the proteins that surrounds the polypeptide exit tunnel on the outside of the ribosome. Forms the main docking site for trigger factor binding to the ribosome. This Oleidesulfovibrio alaskensis (strain ATCC BAA-1058 / DSM 17464 / G20) (Desulfovibrio alaskensis) protein is Large ribosomal subunit protein uL23.